The sequence spans 416 residues: POC1 centriolar protein homolog A (416 aa).

WD repeat units follow at residues 16-55, 58-97, 100-139, 142-181, 184-223, 226-265, and 268-307; these read GHRDAITSLDFSPSGKQIASGSVDASVMVWNMKPQSRAYR, GHKDAVTCVQFSPSAHLLASSSRDKTVRLWVPSVKGESVL, AHTGSVRSVCFSADGQSLLTASDDQSIKLWSVHRQKIICT, EHNNWVRCARFSPDGQLMVSVSDDRTVKLWDASSRQLIHT, EPGGYSSYVDFHPSSTCIATASSDNTVRVWDIRTHTLLQH, VHSAAVNALSFHPSGNHLLTASSDSTLKILDLLEGRLLYT, and GHQGSASCVSFSRSGDQFASAGSDQQVMVWRTNFDSVDYS. The interval 311-340 is disordered; the sequence is QQKRDHRTPSAQASGAAGDPESRSGQKTEV. Residues 380 to 412 are a coiled coil; it reads QLDVLTQTVAILEQRLTLTEDKLKECLEQQHQA.

Belongs to the WD repeat POC1 family.

Its function is as follows. May play an important role in centriole assembly and/or stability and ciliogenesis. This chain is POC1 centriolar protein homolog A, found in Danio rerio (Zebrafish).